A 321-amino-acid chain; its full sequence is Quinol oxidase subunit 2 (321 aa).

The first 25 residues, M1–G25, serve as a signal peptide directing secretion. C26 is lipidated: N-palmitoyl cysteine. C26 carries S-diacylglycerol cysteine lipidation. 2 helical membrane-spanning segments follow: residues S49–V69 and T90–P110. The disordered stretch occupies residues Q294–E321. Basic and acidic residues predominate over residues S300–E321.

This sequence belongs to the cytochrome c oxidase subunit 2 family.

The protein resides in the cell membrane. It catalyses the reaction 2 a quinol + O2 = 2 a quinone + 2 H2O. Its function is as follows. Catalyzes quinol oxidation with the concomitant reduction of oxygen to water. Major component for energy conversion during vegetative growth. Subunit II transfers the electrons from a quinol to the binuclear center of the catalytic subunit I. This is Quinol oxidase subunit 2 (qoxA) from Bacillus spizizenii (strain ATCC 23059 / NRRL B-14472 / W23) (Bacillus subtilis subsp. spizizenii).